The chain runs to 103 residues: NAD(P)H-quinone oxidoreductase subunit 4L (103 aa).

Helical transmembrane passes span 5–25, 32–52, and 66–86; these read LQYC…GLIT, VLMS…GFSN, and IFVI…VLAI.

This sequence belongs to the complex I subunit 4L family. As to quaternary structure, NDH-1 can be composed of about 15 different subunits; different subcomplexes with different compositions have been identified which probably have different functions.

The protein localises to the cellular thylakoid membrane. The catalysed reaction is a plastoquinone + NADH + (n+1) H(+)(in) = a plastoquinol + NAD(+) + n H(+)(out). It catalyses the reaction a plastoquinone + NADPH + (n+1) H(+)(in) = a plastoquinol + NADP(+) + n H(+)(out). Functionally, NDH-1 shuttles electrons from an unknown electron donor, via FMN and iron-sulfur (Fe-S) centers, to quinones in the respiratory and/or the photosynthetic chain. The immediate electron acceptor for the enzyme in this species is believed to be plastoquinone. Couples the redox reaction to proton translocation, and thus conserves the redox energy in a proton gradient. Cyanobacterial NDH-1 also plays a role in inorganic carbon-concentration. The polypeptide is NAD(P)H-quinone oxidoreductase subunit 4L (Synechocystis sp. (strain ATCC 27184 / PCC 6803 / Kazusa)).